The chain runs to 227 residues: MRVAGAAKLVVAVAVFLLTFYVISQVFEIKMDASLGSLFARSALDSAIRSTKPPRYKCGISKACPEKHFAFKMASGAANVVGPKICLEDNVLMSGVKNNVGRGINVALVNGKTGDVIDTKYFDMWGGDVAPFIEFLKTIQDGTVVLMATYDDGATKLTEEARRLIAELGSTSITSLGFRDNWVFCGGKGIKTKSPFEQHIKNNKDTNKYEGWPEVVEMEGCIPQKQD.

An N-terminal signal peptide occupies residues 1 to 24 (MRVAGAAKLVVAVAVFLLTFYVIS). 2 disulfide bridges follow: C58–C86 and C64–C221. A GG-type lectin domain is found at 67 to 225 (KHFAFKMASG…VEMEGCIPQK (159 aa)).

This sequence belongs to the FAM3 family.

Its subcellular location is the secreted. The protein localises to the cytoplasmic vesicle. Functionally, may be involved in retinal laminar formation. Promotes epithelial to mesenchymal transition. This is Protein FAM3C (Fam3c) from Rattus norvegicus (Rat).